Reading from the N-terminus, the 309-residue chain is Foldase protein PrsA 2 (309 aa).

Residues 1–20 (MKYRLIGVGASLVVAVMLTG) form the signal peptide. A lipid anchor (N-palmitoyl cysteine) is attached at cysteine 21. The S-diacylglycerol cysteine moiety is linked to residue cysteine 21. Residues 137 to 232 (MPMTTVQHIA…TADTKDKPTY (96 aa)) enclose the PpiC domain.

The protein belongs to the PrsA family.

The protein resides in the cell membrane. It catalyses the reaction [protein]-peptidylproline (omega=180) = [protein]-peptidylproline (omega=0). Functionally, plays a major role in protein secretion by helping the post-translocational extracellular folding of several secreted proteins. The polypeptide is Foldase protein PrsA 2 (prsA2) (Lactiplantibacillus plantarum (strain ATCC BAA-793 / NCIMB 8826 / WCFS1) (Lactobacillus plantarum)).